We begin with the raw amino-acid sequence, 278 residues long: Orotidine 5'-phosphate decarboxylase (278 aa).

K96 (proton donor) is an active-site residue.

This sequence belongs to the OMP decarboxylase family. Type 2 subfamily.

The enzyme catalyses orotidine 5'-phosphate + H(+) = UMP + CO2. Its pathway is pyrimidine metabolism; UMP biosynthesis via de novo pathway; UMP from orotate: step 2/2. The chain is Orotidine 5'-phosphate decarboxylase (pyrF) from Streptomyces coelicolor (strain ATCC BAA-471 / A3(2) / M145).